The primary structure comprises 269 residues: Protein tio (269 aa).

Basic and acidic residues predominate over residues 1-12; that stretch reads MANEPQEHEEGK. The disordered stretch occupies residues 1–127; that stretch reads MANEPQEHEE…NETKCPDEQN (127 aa). At 1 to 246 the chain is on the cytoplasmic side; the sequence is MANEPQEHEE…VEKKLTCVIC (246 aa). Positions 27–41 are enriched in pro residues; that stretch reads PNIPQDPTPGTPPGP. Residues 61 to 74 show a composition bias toward low complexity; sequence SEGPPDGSGNSSPP. 2 stretches are compositionally biased toward polar residues: residues 91 to 101 and 114 to 127; these read SESGGNNSAPN and AGNGNETKCPDEQN. A Phosphotyrosine; by host LCK modification is found at Y136. The CSKH/LBD2 stretch occupies residues 158 to 167; sequence EEERSPFNKY. The segment at 186-195 is SH3B/LBD1; that stretch reads IPPPQLPPRP. A helical transmembrane segment spans residues 247–267; the sequence is LLIGILVLLILLFMLGFLFLL. Residues 268-269 lie on the Extracellular side of the membrane; the sequence is MK.

In terms of assembly, homodimer. Binds SH3 domain of host LYN, HCK, LCK, SRC, FYN or YES. When tyrosine-phosphorylated, binds to the SH2 domain of host LCK, SRC, or FYN. In terms of processing, phosphorylated by host LCK, SRC and less efficiently by FYN.

It localises to the host cell membrane. Its function is as follows. Transforms host T-cells, inducing T-cell lymphomia in the host. Activates at least SRC and LCK tyrosines kinases, thereby activating signaling pathway transforming host T-cells. Human T-cells transformed ex vivo display a IL2 indenpendent growth phenotype. The polypeptide is Protein tio (Ateles (AtHV-3)).